We begin with the raw amino-acid sequence, 510 residues long: 2,3-bisphosphoglycerate-independent phosphoglycerate mutase (510 aa).

Positions 12 and 62 each coordinate Mn(2+). Ser-62 (phosphoserine intermediate) is an active-site residue. Residues His-123, 153–154, Arg-185, Arg-191, 261–264, and Lys-336 contribute to the substrate site; these read RD and RPDR. 5 residues coordinate Mn(2+): Asp-403, His-407, Asp-444, His-445, and His-462.

The protein belongs to the BPG-independent phosphoglycerate mutase family. In terms of assembly, monomer. Mn(2+) serves as cofactor.

The catalysed reaction is (2R)-2-phosphoglycerate = (2R)-3-phosphoglycerate. It functions in the pathway carbohydrate degradation; glycolysis; pyruvate from D-glyceraldehyde 3-phosphate: step 3/5. Essential for rapid growth and for sporulation. Catalyzes the interconversion of 2-phosphoglycerate and 3-phosphoglycerate. This chain is 2,3-bisphosphoglycerate-independent phosphoglycerate mutase, found in Priestia megaterium (strain DSM 319 / IMG 1521) (Bacillus megaterium).